The following is a 156-amino-acid chain: ATP synthase subunit b (156 aa).

A helical transmembrane segment spans residues 5-27 (ITLIGQMITFAIFVGFTMKFVWP).

Belongs to the ATPase B chain family. F-type ATPases have 2 components, F(1) - the catalytic core - and F(0) - the membrane proton channel. F(1) has five subunits: alpha(3), beta(3), gamma(1), delta(1), epsilon(1). F(0) has three main subunits: a(1), b(2) and c(10-14). The alpha and beta chains form an alternating ring which encloses part of the gamma chain. F(1) is attached to F(0) by a central stalk formed by the gamma and epsilon chains, while a peripheral stalk is formed by the delta and b chains.

It is found in the cell inner membrane. Its function is as follows. F(1)F(0) ATP synthase produces ATP from ADP in the presence of a proton or sodium gradient. F-type ATPases consist of two structural domains, F(1) containing the extramembraneous catalytic core and F(0) containing the membrane proton channel, linked together by a central stalk and a peripheral stalk. During catalysis, ATP synthesis in the catalytic domain of F(1) is coupled via a rotary mechanism of the central stalk subunits to proton translocation. Functionally, component of the F(0) channel, it forms part of the peripheral stalk, linking F(1) to F(0). This chain is ATP synthase subunit b, found in Francisella tularensis subsp. tularensis (strain SCHU S4 / Schu 4).